The primary structure comprises 125 residues: Holo-[acyl-carrier-protein] synthase (125 aa).

Positions 8 and 57 each coordinate Mg(2+).

It belongs to the P-Pant transferase superfamily. AcpS family. It depends on Mg(2+) as a cofactor.

It is found in the cytoplasm. The enzyme catalyses apo-[ACP] + CoA = holo-[ACP] + adenosine 3',5'-bisphosphate + H(+). Functionally, transfers the 4'-phosphopantetheine moiety from coenzyme A to a Ser of acyl-carrier-protein. This is Holo-[acyl-carrier-protein] synthase from Geobacter sp. (strain M21).